Reading from the N-terminus, the 305-residue chain is Superoxide dismutase [Fe] 2, chloroplastic (305 aa).

The N-terminal 46 residues, 1-46, are a transit peptide targeting the chloroplast; it reads MMNVAVTATPSSLLYSPLLLPSQGPNRRMQWKRNGKRRLGTKVAVS. The Fe cation site is built by H77, H129, D228, and H232. Residues 270–305 form a disordered region; the sequence is AVQREQEGTETEDEENPDDEVPEVYLDSDIDVSEVD. The span at 277–305 shows a compositional bias: acidic residues; that stretch reads GTETEDEENPDDEVPEVYLDSDIDVSEVD.

The protein belongs to the iron/manganese superoxide dismutase family. Heterodimer with FSD3. Interacts with MRL7 and PRDA1. Fe cation serves as cofactor.

It is found in the plastid. The protein localises to the chloroplast thylakoid. The enzyme catalyses 2 superoxide + 2 H(+) = H2O2 + O2. With respect to regulation, activated by cpn20/cpn21 (in vitro). Destroys superoxide anion radicals which are normally produced within the cells and which are toxic to biological systems. Plays important role in chloroplast development, particularly in the maintenance of thylakoids membranes. Seems to act as a heterodimer with FSD3. The polypeptide is Superoxide dismutase [Fe] 2, chloroplastic (FSD2) (Arabidopsis thaliana (Mouse-ear cress)).